The following is a 304-amino-acid chain: Sulfate adenylyltransferase subunit 2 1 (304 aa).

The protein belongs to the PAPS reductase family. CysD subfamily. As to quaternary structure, heterodimer composed of CysD, the smaller subunit, and CysN.

It catalyses the reaction sulfate + ATP + H(+) = adenosine 5'-phosphosulfate + diphosphate. Its pathway is sulfur metabolism; hydrogen sulfide biosynthesis; sulfite from sulfate: step 1/3. In terms of biological role, with CysN forms the ATP sulfurylase (ATPS) that catalyzes the adenylation of sulfate producing adenosine 5'-phosphosulfate (APS) and diphosphate, the first enzymatic step in sulfur assimilation pathway. APS synthesis involves the formation of a high-energy phosphoric-sulfuric acid anhydride bond driven by GTP hydrolysis by CysN coupled to ATP hydrolysis by CysD. In Marinobacter nauticus (strain ATCC 700491 / DSM 11845 / VT8) (Marinobacter aquaeolei), this protein is Sulfate adenylyltransferase subunit 2 1.